A 1414-amino-acid polypeptide reads, in one-letter code: DNA-directed RNA polymerase subunit beta' (1414 aa).

Residues Cys-70, Cys-72, Cys-85, and Cys-88 each coordinate Zn(2+). Mg(2+) contacts are provided by Asp-460, Asp-462, and Asp-464. Positions 814, 888, 895, and 898 each coordinate Zn(2+). The disordered stretch occupies residues 1378–1414 (EREAARQLANPFEDAPVTVGGEPEAPAADTPSDDSAE).

The protein belongs to the RNA polymerase beta' chain family. In terms of assembly, the RNAP catalytic core consists of 2 alpha, 1 beta, 1 beta' and 1 omega subunit. When a sigma factor is associated with the core the holoenzyme is formed, which can initiate transcription. Mg(2+) serves as cofactor. Requires Zn(2+) as cofactor.

It catalyses the reaction RNA(n) + a ribonucleoside 5'-triphosphate = RNA(n+1) + diphosphate. Its function is as follows. DNA-dependent RNA polymerase catalyzes the transcription of DNA into RNA using the four ribonucleoside triphosphates as substrates. This is DNA-directed RNA polymerase subunit beta' from Bordetella bronchiseptica (strain ATCC BAA-588 / NCTC 13252 / RB50) (Alcaligenes bronchisepticus).